Here is a 20-residue protein sequence, read N- to C-terminus: Unknown protein from 2D-PAGE of needles (20 aa).

This chain is Unknown protein from 2D-PAGE of needles, found in Pinus pinaster (Maritime pine).